A 309-amino-acid chain; its full sequence is Acetylglutamate kinase (309 aa).

Residues 82 to 83, arginine 104, and asparagine 206 contribute to the substrate site; that span reads GG.

The protein belongs to the acetylglutamate kinase family. ArgB subfamily.

The protein localises to the cytoplasm. The catalysed reaction is N-acetyl-L-glutamate + ATP = N-acetyl-L-glutamyl 5-phosphate + ADP. The protein operates within amino-acid biosynthesis; L-arginine biosynthesis; N(2)-acetyl-L-ornithine from L-glutamate: step 2/4. Its function is as follows. Catalyzes the ATP-dependent phosphorylation of N-acetyl-L-glutamate. This is Acetylglutamate kinase from Cupriavidus pinatubonensis (strain JMP 134 / LMG 1197) (Cupriavidus necator (strain JMP 134)).